We begin with the raw amino-acid sequence, 492 residues long: uncharacterized protein (492 aa).

12 helical membrane passes run 13–33 (LGFI…WRFG), 42–62 (GAFL…LMIL), 97–117 (FIIT…LIIL), 150–170 (GILV…SAGI), 180–200 (IMIP…LTLP), 222–242 (VWLS…GILI), 258–278 (AVTV…AVFG), 320–340 (FGIV…VSIV), 359–379 (LLAV…GAGL), 391–411 (GYLL…LFGG), 428–448 (VWWK…VVFL), and 463–483 (TTYV…SVIL).

The protein belongs to the sodium:neurotransmitter symporter (SNF) (TC 2.A.22) family.

Its subcellular location is the cell membrane. Its function is as follows. Putative sodium-dependent transporter. This is an uncharacterized protein from Methanocaldococcus jannaschii (strain ATCC 43067 / DSM 2661 / JAL-1 / JCM 10045 / NBRC 100440) (Methanococcus jannaschii).